Here is a 144-residue protein sequence, read N- to C-terminus: Putative pre-16S rRNA nuclease (144 aa).

This sequence belongs to the YqgF nuclease family.

It is found in the cytoplasm. Functionally, could be a nuclease involved in processing of the 5'-end of pre-16S rRNA. In Pseudomonas paraeruginosa (strain DSM 24068 / PA7) (Pseudomonas aeruginosa (strain PA7)), this protein is Putative pre-16S rRNA nuclease.